The following is a 799-amino-acid chain: MVRQLVWQRATASRRLAPKCLSPQQLFARRGLATEASAARMPPYPKIVRNLEQVRKVLGSSRALTLAEKILYAHLDNAEESLLTGTNNGKDIRGKANLKLKPDRVAMQDASAQMALLQFMSCGLPSTAVPASIHCDHMIVGERGADTDLPASIEGNREVFDFLESAAKRYGIEFWPPGAGIIHQSVLENYAAPGLMMLGTDSHTPNAGGLGAIAIGVGGADAVDALVDAPWELKAPRILGVRLEGRLSGWASPKDIILHLAGKLTVRGGTGYVIEYHGPGVETLSCTGMATCCNMGAEVGATTSVFPFSPSMVPYLQATHRGHVAQAAAEIAASGPKNLLRADDGAEYDQLITIDLSTLEPHVNGPFTPDLSVRLSDFANTVRENKWPETLGAGLIGSCTNSSYEDMTRAEDLVKQASAAGLKPKADFFITPGSEQIRATLDRDQTLASFSEAGGTVLANACGPCIGQWKRTDGVAKGEDNAIFTSYNRNFPGRNDGNRRTMNFLASPEIVTALAYSGSTTFNPMTDTLKTPSGEEFKFRPPQGSDLPSAGFADGNPALQPSAGVPDASVEVIVSPTSERLALLEPFAPFPEGELSGLKVLYKVKGQCTTDTISAAGPWLKYKGHLPNISANTLIGAVNAATGETNVAYDDAGNKHSIPDLAARWKADGIEWLVVAEDNYGEGSAREHAALQPRYLGGRIIVAKSFARIHETNLKKQGVVPLTFADKADYDRIDACDQVDTVGLYETLQSGGQGSIQLQVTKKSGEKLTIPVNHTLSKDQCGFILAGSALNLLAKRAHQ.

The transit peptide at Met1–Leu32 directs the protein to the mitochondrion. Substrate-binding positions include Gln108 and Asp201–His203. Residues Cys399, Cys462, and Cys465 each coordinate [4Fe-4S] cluster. Residues Arg489 and Arg494 each coordinate substrate. The segment at Lys538 to Gly564 is disordered. Substrate is bound at residue Ala685 to Arg686.

The protein belongs to the aconitase/IPM isomerase family.

The protein localises to the mitochondrion. Its function is as follows. Has no detectable activity towards cis-acontiate or cis-homoaconitate. In Aspergillus fumigatus (strain ATCC MYA-4609 / CBS 101355 / FGSC A1100 / Af293) (Neosartorya fumigata), this protein is Putative aconitate hydratase, mitochondrial (acoB).